A 373-amino-acid chain; its full sequence is Dual-specificity RNA methyltransferase RlmN (373 aa).

The active-site Proton acceptor is the glutamate 94. The Radical SAM core domain maps to 100 to 339 (EEDRATLCVS…VIVRKTRGDD (240 aa)). Cysteines 107 and 344 form a disulfide. Positions 114, 118, and 121 each coordinate [4Fe-4S] cluster. Residues 168-169 (GE), serine 200, 222-224 (SIH), and asparagine 301 each bind S-adenosyl-L-methionine. The S-methylcysteine intermediate role is filled by cysteine 344.

Belongs to the radical SAM superfamily. RlmN family. [4Fe-4S] cluster serves as cofactor.

Its subcellular location is the cytoplasm. It carries out the reaction adenosine(2503) in 23S rRNA + 2 reduced [2Fe-2S]-[ferredoxin] + 2 S-adenosyl-L-methionine = 2-methyladenosine(2503) in 23S rRNA + 5'-deoxyadenosine + L-methionine + 2 oxidized [2Fe-2S]-[ferredoxin] + S-adenosyl-L-homocysteine. It catalyses the reaction adenosine(37) in tRNA + 2 reduced [2Fe-2S]-[ferredoxin] + 2 S-adenosyl-L-methionine = 2-methyladenosine(37) in tRNA + 5'-deoxyadenosine + L-methionine + 2 oxidized [2Fe-2S]-[ferredoxin] + S-adenosyl-L-homocysteine. Functionally, specifically methylates position 2 of adenine 2503 in 23S rRNA and position 2 of adenine 37 in tRNAs. m2A2503 modification seems to play a crucial role in the proofreading step occurring at the peptidyl transferase center and thus would serve to optimize ribosomal fidelity. The protein is Dual-specificity RNA methyltransferase RlmN of Shewanella loihica (strain ATCC BAA-1088 / PV-4).